Consider the following 305-residue polypeptide: Probable cell division protein WhiA (305 aa).

A DNA-binding region (H-T-H motif) is located at residues 269 to 302; sequence TIKELGELLDPPLGKSGVNHRLRKLVERSNDLKK.

The protein belongs to the WhiA family.

Involved in cell division and chromosome segregation. The protein is Probable cell division protein WhiA of Lactococcus lactis subsp. cremoris (strain MG1363).